The sequence spans 208 residues: Thymidylate kinase (208 aa).

Position 10–17 (10–17 (GPEGSGKT)) interacts with ATP.

This sequence belongs to the thymidylate kinase family.

It carries out the reaction dTMP + ATP = dTDP + ADP. Functionally, phosphorylation of dTMP to form dTDP in both de novo and salvage pathways of dTTP synthesis. In Bacillus mycoides (strain KBAB4) (Bacillus weihenstephanensis), this protein is Thymidylate kinase.